The sequence spans 423 residues: Serine--tRNA ligase (423 aa).

Basic and acidic residues predominate over residues methionine 1–aspartate 12. Residues methionine 1 to glutamate 26 form a disordered region. Threonine 230 to glutamate 232 lines the L-serine pocket. Residues arginine 261–glutamate 263 and valine 277 contribute to the ATP site. Glutamate 284 provides a ligand contact to L-serine. Glutamate 348 to serine 351 provides a ligand contact to ATP. Threonine 383 provides a ligand contact to L-serine.

Belongs to the class-II aminoacyl-tRNA synthetase family. Type-1 seryl-tRNA synthetase subfamily. Homodimer. The tRNA molecule binds across the dimer.

The protein resides in the cytoplasm. It carries out the reaction tRNA(Ser) + L-serine + ATP = L-seryl-tRNA(Ser) + AMP + diphosphate + H(+). The catalysed reaction is tRNA(Sec) + L-serine + ATP = L-seryl-tRNA(Sec) + AMP + diphosphate + H(+). The protein operates within aminoacyl-tRNA biosynthesis; selenocysteinyl-tRNA(Sec) biosynthesis; L-seryl-tRNA(Sec) from L-serine and tRNA(Sec): step 1/1. In terms of biological role, catalyzes the attachment of serine to tRNA(Ser). Is also able to aminoacylate tRNA(Sec) with serine, to form the misacylated tRNA L-seryl-tRNA(Sec), which will be further converted into selenocysteinyl-tRNA(Sec). In Beutenbergia cavernae (strain ATCC BAA-8 / DSM 12333 / CCUG 43141 / JCM 11478 / NBRC 16432 / NCIMB 13614 / HKI 0122), this protein is Serine--tRNA ligase.